The following is a 387-amino-acid chain: MENVVIIDAVRTPMGRSKGGAFRQVRAEDLSAHLMREVLSRNPELNAAEIDDIYWGCVQQTLEQGFNIARNASLLAEIPHSVPAVTVNRLCGSSMQALHDGARAIMVGDAQVSLIGGVEHMGHVPMNHGVDFHPGMGRTVAKAAGMMGLTAEMLAKIHNISRQSQDEFAVRSHQRAYAATQADHFAKEIVATNGHDADGILKRFDFDEVIRPETNLAGLAALRPAFDPVNGTVTAGTSSALSDGASAMLIMSESRAKSLGLTPRARIRSMAVVGCDPSIMGYGPVPASQLALKRAGLKLEDIGLFELNEAFAAQSLACLKGLGLLESMDDKVNLNGGAIALGHPLGCSGARISTTLLNLMERRDVQFGLATMCIGLGQGIATIFERV.

Cys91 acts as the Acyl-thioester intermediate in catalysis. Active-site proton acceptor residues include His343 and Cys373.

Belongs to the thiolase-like superfamily. Thiolase family. Heterotetramer of two alpha chains (FadB) and two beta chains (FadA).

It is found in the cytoplasm. The enzyme catalyses an acyl-CoA + acetyl-CoA = a 3-oxoacyl-CoA + CoA. Its pathway is lipid metabolism; fatty acid beta-oxidation. Its function is as follows. Catalyzes the final step of fatty acid oxidation in which acetyl-CoA is released and the CoA ester of a fatty acid two carbons shorter is formed. The polypeptide is 3-ketoacyl-CoA thiolase (Yersinia enterocolitica serotype O:8 / biotype 1B (strain NCTC 13174 / 8081)).